The chain runs to 120 residues: Holo-[acyl-carrier-protein] synthase (120 aa).

Residues Asp-8 and Glu-58 each contribute to the Mg(2+) site.

It belongs to the P-Pant transferase superfamily. AcpS family. Mg(2+) serves as cofactor.

It localises to the cytoplasm. The catalysed reaction is apo-[ACP] + CoA = holo-[ACP] + adenosine 3',5'-bisphosphate + H(+). Functionally, transfers the 4'-phosphopantetheine moiety from coenzyme A to a Ser of acyl-carrier-protein. In Streptococcus pneumoniae (strain Hungary19A-6), this protein is Holo-[acyl-carrier-protein] synthase.